Reading from the N-terminus, the 229-residue chain is 2-C-methyl-D-erythritol 4-phosphate cytidylyltransferase (229 aa).

It belongs to the IspD/TarI cytidylyltransferase family. IspD subfamily.

It catalyses the reaction 2-C-methyl-D-erythritol 4-phosphate + CTP + H(+) = 4-CDP-2-C-methyl-D-erythritol + diphosphate. It participates in isoprenoid biosynthesis; isopentenyl diphosphate biosynthesis via DXP pathway; isopentenyl diphosphate from 1-deoxy-D-xylulose 5-phosphate: step 2/6. Its function is as follows. Catalyzes the formation of 4-diphosphocytidyl-2-C-methyl-D-erythritol from CTP and 2-C-methyl-D-erythritol 4-phosphate (MEP). This is 2-C-methyl-D-erythritol 4-phosphate cytidylyltransferase from Neisseria meningitidis serogroup C / serotype 2a (strain ATCC 700532 / DSM 15464 / FAM18).